The primary structure comprises 949 residues: uncharacterized protein (949 aa).

In terms of domain architecture, Calponin-homology (CH) spans 64–170 (LCSVHEAKKW…YCLHALSYLL (107 aa)).

Its subcellular location is the nucleus. This is an uncharacterized protein from Schizosaccharomyces pombe (strain 972 / ATCC 24843) (Fission yeast).